Consider the following 432-residue polypeptide: Serine hydroxymethyltransferase 1 (432 aa).

(6S)-5,6,7,8-tetrahydrofolate contacts are provided by residues Leu-131 and 135–137 (GHL). The residue at position 240 (Lys-240) is an N6-(pyridoxal phosphate)lysine.

This sequence belongs to the SHMT family. In terms of assembly, homodimer. It depends on pyridoxal 5'-phosphate as a cofactor.

It is found in the cytoplasm. It carries out the reaction (6R)-5,10-methylene-5,6,7,8-tetrahydrofolate + glycine + H2O = (6S)-5,6,7,8-tetrahydrofolate + L-serine. It functions in the pathway one-carbon metabolism; tetrahydrofolate interconversion. The protein operates within amino-acid biosynthesis; glycine biosynthesis; glycine from L-serine: step 1/1. Its function is as follows. Catalyzes the reversible interconversion of serine and glycine with tetrahydrofolate (THF) serving as the one-carbon carrier. This reaction serves as the major source of one-carbon groups required for the biosynthesis of purines, thymidylate, methionine, and other important biomolecules. Also exhibits THF-independent aldolase activity toward beta-hydroxyamino acids, producing glycine and aldehydes, via a retro-aldol mechanism. This Rhodopseudomonas palustris (strain ATCC BAA-98 / CGA009) protein is Serine hydroxymethyltransferase 1.